An 89-amino-acid chain; its full sequence is Probable Fe(2+)-trafficking protein (89 aa).

It belongs to the Fe(2+)-trafficking protein family.

Could be a mediator in iron transactions between iron acquisition and iron-requiring processes, such as synthesis and/or repair of Fe-S clusters in biosynthetic enzymes. The chain is Probable Fe(2+)-trafficking protein from Acinetobacter baumannii (strain SDF).